We begin with the raw amino-acid sequence, 393 residues long: METFLFTSESVNEGHPDKLCDQISDAVLDACLAQDPDSKVACETCTKTNMVMVFGEITTKADVDYEQIVRKTCREIGFISDDVGLDADHCKVLVNIEQQSPDIAQGVHGHFTKRPEEIGAGDQGHMFGYATDETLELMPKCHVLATKLGAKLTEVRKNGTCPWLRPHGKTQVTVEYRNDNGAMVPERVHTVLISTQHDETVPNDEIAPDLKEHVIKPVIPEKYLDENTIFHLNPSGRFVIGGPHGDAGLTGRKIIIDTYGGWGAHGGGAFSGKDPTKVDRSGAYIVRQAAKSIVANGLARRCIVQVSYAIGVPEPLSLFVDTYGTGSIPDKEILEIIKEHFDFRPGMISINLDLKRGGNGRSQKTAAYGHFGRDDPDFTWETVKPLKWEKAQA.

Residue Glu-9 participates in Mg(2+) binding. His-15 serves as a coordination point for ATP. Glu-43 contributes to the K(+) binding site. 2 residues coordinate L-methionine: Glu-56 and Gln-99. Residues 167 to 169, 235 to 238, Asp-246, 252 to 253, Ala-269, Lys-273, and Lys-277 contribute to the ATP site; these read HGK, SGRF, and RK. Residue Asp-246 coordinates L-methionine. An L-methionine-binding site is contributed by Lys-277.

This sequence belongs to the AdoMet synthase family. In terms of assembly, homotetramer. Mn(2+) serves as cofactor. The cofactor is Mg(2+). Co(2+) is required as a cofactor. Requires K(+) as cofactor. As to expression, root.

It localises to the cytoplasm. It catalyses the reaction L-methionine + ATP + H2O = S-adenosyl-L-methionine + phosphate + diphosphate. It functions in the pathway amino-acid biosynthesis; S-adenosyl-L-methionine biosynthesis; S-adenosyl-L-methionine from L-methionine: step 1/1. Its function is as follows. Catalyzes the formation of S-adenosylmethionine from methionine and ATP. The reaction comprises two steps that are both catalyzed by the same enzyme: formation of S-adenosylmethionine (AdoMet) and triphosphate, and subsequent hydrolysis of the triphosphate. The sequence is that of S-adenosylmethionine synthase (METK) from Pinus banksiana (Jack pine).